The sequence spans 636 residues: 1-deoxy-D-xylulose-5-phosphate synthase (636 aa).

Residues histidine 74 and 115–117 each bind thiamine diphosphate; that span reads GHS. Aspartate 146 lines the Mg(2+) pocket. Thiamine diphosphate-binding positions include 147 to 148, asparagine 175, tyrosine 286, and glutamate 367; that span reads GA. Asparagine 175 contacts Mg(2+).

Belongs to the transketolase family. DXPS subfamily. As to quaternary structure, homodimer. Mg(2+) is required as a cofactor. The cofactor is thiamine diphosphate.

The catalysed reaction is D-glyceraldehyde 3-phosphate + pyruvate + H(+) = 1-deoxy-D-xylulose 5-phosphate + CO2. Its pathway is metabolic intermediate biosynthesis; 1-deoxy-D-xylulose 5-phosphate biosynthesis; 1-deoxy-D-xylulose 5-phosphate from D-glyceraldehyde 3-phosphate and pyruvate: step 1/1. In terms of biological role, catalyzes the acyloin condensation reaction between C atoms 2 and 3 of pyruvate and glyceraldehyde 3-phosphate to yield 1-deoxy-D-xylulose-5-phosphate (DXP). This is 1-deoxy-D-xylulose-5-phosphate synthase from Halothermothrix orenii (strain H 168 / OCM 544 / DSM 9562).